Consider the following 354-residue polypeptide: UDP-3-O-acylglucosamine N-acyltransferase (354 aa).

H257 (proton acceptor) is an active-site residue. The interval 335–354 is disordered; sequence AQQVSKSKLRGRNPGGKQND.

The protein belongs to the transferase hexapeptide repeat family. LpxD subfamily. Homotrimer.

It catalyses the reaction a UDP-3-O-[(3R)-3-hydroxyacyl]-alpha-D-glucosamine + a (3R)-hydroxyacyl-[ACP] = a UDP-2-N,3-O-bis[(3R)-3-hydroxyacyl]-alpha-D-glucosamine + holo-[ACP] + H(+). It functions in the pathway bacterial outer membrane biogenesis; LPS lipid A biosynthesis. Functionally, catalyzes the N-acylation of UDP-3-O-acylglucosamine using 3-hydroxyacyl-ACP as the acyl donor. Is involved in the biosynthesis of lipid A, a phosphorylated glycolipid that anchors the lipopolysaccharide to the outer membrane of the cell. This is UDP-3-O-acylglucosamine N-acyltransferase from Rhizobium etli (strain ATCC 51251 / DSM 11541 / JCM 21823 / NBRC 15573 / CFN 42).